A 357-amino-acid chain; its full sequence is Heat-inducible transcription repressor HrcA (357 aa).

The protein belongs to the HrcA family.

Its function is as follows. Negative regulator of class I heat shock genes (grpE-dnaK-dnaJ and groELS operons). Prevents heat-shock induction of these operons. The polypeptide is Heat-inducible transcription repressor HrcA (Chlorobium phaeovibrioides (strain DSM 265 / 1930) (Prosthecochloris vibrioformis (strain DSM 265))).